A 770-amino-acid polypeptide reads, in one-letter code: Metabotropic glutamate receptor-like protein F (770 aa).

A signal peptide spans 1–22 (MKIKNFIYFLIYFIFLFKVING). Residues 23 to 370 (QNKTCKISVL…STVDYPESLK (348 aa)) lie on the Extracellular side of the membrane. N-linked (GlcNAc...) asparagine glycosylation is found at Asn24, Asn185, Asn260, Asn286, Asn319, and Asn344. Residues 371-391 (IGVTVVSGFCIFLCLISMIIV) form a helical membrane-spanning segment. At 392 to 405 (IKFKEAKVIKSSSP) the chain is on the cytoplasmic side. Residues 406–426 (IFCLLILFGCIVIFVGCIMFA) traverse the membrane as a helical segment. Residues 427 to 442 (RSPTDGSCRSRVWLLS) lie on the Extracellular side of the membrane. Residues 443–463 (LGYTIFLGNLMVKNWRIWLLF) form a helical membrane-spanning segment. At 464–483 (DNPKLKKRAITNWKLYPWVS) the chain is on the cytoplasmic side. The helical transmembrane segment at 484-504 (GIVIIDIVILSIWQALGDIVA) threads the bilayer. At 505–528 (ESRTGIDSLTKYEYRNVCASSDQG) the chain is on the extracellular side. The helical transmembrane segment at 529–549 (SIALYLLLVFHGLILLVACFI) threads the bilayer. Residues 550–565 (SFKIKVVDIEEFNESK) lie on the Cytoplasmic side of the membrane. A helical transmembrane segment spans residues 566–586 (PITTSVYIITFCLFIVIPIMV). Residues 587–594 (SSPTVTTQ) are Extracellular-facing. Residues 595–615 (TTIICICALITTMLSIILLFG) form a helical membrane-spanning segment. Over 616–770 (TKFFKMITVG…GQTEIDSNDV (155 aa)) the chain is Cytoplasmic. The interval 639–740 (SSHSQRTKSS…EEKQKDEEEI (102 aa)) is disordered. Composition is skewed to basic and acidic residues over residues 676-693 (SSEK…KDHM) and 730-740 (NEEKQKDEEEI). Residues 715 to 760 (REQINDNIILENNNDNEEKQKDEEEIKEEKLLVSEIQAKRLSLEQN) adopt a coiled-coil conformation.

In the N-terminal section; belongs to the BMP lipoprotein family. The protein in the C-terminal section; belongs to the G-protein coupled receptor 3 family. GABA-B receptor subfamily.

The protein localises to the membrane. This chain is Metabotropic glutamate receptor-like protein F (grlF), found in Dictyostelium discoideum (Social amoeba).